Reading from the N-terminus, the 361-residue chain is Histidinol-phosphate aminotransferase (361 aa).

The residue at position 219 (Lys219) is an N6-(pyridoxal phosphate)lysine.

It belongs to the class-II pyridoxal-phosphate-dependent aminotransferase family. Histidinol-phosphate aminotransferase subfamily. Homodimer. Pyridoxal 5'-phosphate serves as cofactor.

The catalysed reaction is L-histidinol phosphate + 2-oxoglutarate = 3-(imidazol-4-yl)-2-oxopropyl phosphate + L-glutamate. It functions in the pathway amino-acid biosynthesis; L-histidine biosynthesis; L-histidine from 5-phospho-alpha-D-ribose 1-diphosphate: step 7/9. The polypeptide is Histidinol-phosphate aminotransferase (Acinetobacter baumannii (strain ACICU)).